A 126-amino-acid polypeptide reads, in one-letter code: Profilin (126 aa).

This sequence belongs to the profilin family. As to quaternary structure, occurs in many kinds of cells as a complex with monomeric actin in a 1:1 ratio.

Its subcellular location is the cytoplasm. It localises to the cytoskeleton. Binds to actin and affects the structure of the cytoskeleton. At high concentrations, profilin prevents the polymerization of actin, whereas it enhances it at low concentrations. By binding to PIP2, it inhibits the formation of IP3 and DG. This Bombyx mori (Silk moth) protein is Profilin.